A 329-amino-acid polypeptide reads, in one-letter code: Bifunctional muramidase/DL-endopeptidase CwlT (329 aa).

The signal sequence occupies residues Met-1 to Thr-29. Residues Arg-59–Val-192 are muramidase. Positions Met-206–Lys-329 constitute a NlpC/P60 domain. Residue Cys-237 is the Nucleophile of the active site. The active-site Proton acceptor is the His-290. Asn-302 is a catalytic residue.

Belongs to the peptidase C40 family.

It is found in the secreted. The catalysed reaction is Hydrolysis of (1-&gt;4)-beta-linkages between N-acetylmuramic acid and N-acetyl-D-glucosamine residues in a peptidoglycan and between N-acetyl-D-glucosamine residues in chitodextrins.. Exhibits both muramidase and DL-endopeptidase activities. The N-terminal region acts as a N-acetylmuramidase, which cleaves the bond between N-acetylmuramic acid and N-acetyl-D-glucosamine (MurNAc-GlcNAc) in peptidoglycan. The C-terminal region acts as a DL-endopeptidase that cleaves the bond between D-gamma-glutamate and meso-diaminopimelic acid. Cannot degrade purified B.anthracis peptidoglycan, which differ from those of B.subtilis. CwlT is required for ICEBs1 conjugation: the muramidase activity is essential, whereas the peptidase activity is partially dispensable for transfer of ICEBs1. This is Bifunctional muramidase/DL-endopeptidase CwlT from Bacillus subtilis (strain 168).